A 298-amino-acid chain; its full sequence is HTH-type transcriptional regulator ArgP (298 aa).

Residues 4 to 60 (VDYRWVAALDAVIAQRGFERAAEKLCITQSAVSQRIKQLEKLMAQPLLVREQPPRPT) form the HTH lysR-type domain. A DNA-binding region (H-T-H motif) is located at residues 21–40 (FERAAEKLCITQSAVSQRIK).

The protein belongs to the LysR transcriptional regulatory family. As to quaternary structure, homodimer.

In terms of biological role, controls the transcription of genes involved in arginine and lysine metabolism. The polypeptide is HTH-type transcriptional regulator ArgP (Photobacterium profundum (strain SS9)).